The sequence spans 338 residues: DNA-directed RNA polymerase subunit alpha (338 aa).

Residues 1 to 225 (MLISQRPTLT…ELFGLARELN (225 aa)) are alpha N-terminal domain (alpha-NTD). The segment at 242–338 (YIAAYGMPIE…YIDTDPEETE (97 aa)) is alpha C-terminal domain (alpha-CTD). The disordered stretch occupies residues 314–338 (FDPTQLDGYDAATGDYIDTDPEETE).

It belongs to the RNA polymerase alpha chain family. In terms of assembly, homodimer. The RNAP catalytic core consists of 2 alpha, 1 beta, 1 beta' and 1 omega subunit. When a sigma factor is associated with the core the holoenzyme is formed, which can initiate transcription.

The catalysed reaction is RNA(n) + a ribonucleoside 5'-triphosphate = RNA(n+1) + diphosphate. DNA-dependent RNA polymerase catalyzes the transcription of DNA into RNA using the four ribonucleoside triphosphates as substrates. This Corynebacterium diphtheriae (strain ATCC 700971 / NCTC 13129 / Biotype gravis) protein is DNA-directed RNA polymerase subunit alpha.